Reading from the N-terminus, the 338-residue chain is Ribosomal RNA small subunit methyltransferase C (338 aa).

This sequence belongs to the methyltransferase superfamily. RsmC family. Monomer.

The protein localises to the cytoplasm. It carries out the reaction guanosine(1207) in 16S rRNA + S-adenosyl-L-methionine = N(2)-methylguanosine(1207) in 16S rRNA + S-adenosyl-L-homocysteine + H(+). Functionally, specifically methylates the guanine in position 1207 of 16S rRNA in the 30S particle. The sequence is that of Ribosomal RNA small subunit methyltransferase C from Buchnera aphidicola subsp. Acyrthosiphon pisum (strain APS) (Acyrthosiphon pisum symbiotic bacterium).